The sequence spans 905 residues: Core protein VP3 (905 aa).

This sequence belongs to the orbivirus VP3 family.

It is found in the virion. The VP3 protein is one of the five proteins (with VP1, VP4, VP6 and VP7) which form the inner capsid of the virus. The chain is Core protein VP3 (Segment-3) from African horse sickness virus (AHSV).